A 576-amino-acid polypeptide reads, in one-letter code: Protein O-linked-mannose beta-1,4-N-acetylglucosaminyltransferase 2 (576 aa).

At 1 to 4 (MNIS) the chain is on the cytoplasmic side. The helical; Signal-anchor for type II membrane protein transmembrane segment at 5-25 (AVFNALLVSIMAAVLWKHVKL) threads the bilayer. Residues 26–576 (LEQFYVIEEE…PFAEVLVCNT (551 aa)) are Lumenal-facing. N98, N275, N335, N451, N539, and N561 each carry an N-linked (GlcNAc...) asparagine glycan. In terms of domain architecture, Fibronectin type-III spans 482 to 576 (RESKCQASAQ…PFAEVLVCNT (95 aa)).

This sequence belongs to the glycosyltransferase 61 family.

The protein resides in the endoplasmic reticulum membrane. It carries out the reaction 3-O-(alpha-D-mannosyl)-L-threonyl-[protein] + UDP-N-acetyl-alpha-D-glucosamine = 3-O-(N-acetyl-beta-D-glucosaminyl-(1-&gt;4)-alpha-D-mannosyl)-L-threonyl-[protein] + UDP + H(+). It participates in protein modification; protein glycosylation. Its function is as follows. O-linked mannose beta-1,4-N-acetylglucosaminyltransferase that transfers UDP-N-acetyl-D-glucosamine to the 4-position of the mannose to generate N-acetyl-D-glucosamine-beta-1,4-O-D-mannosylprotein. Involved in the biosynthesis of the phosphorylated O-mannosyl trisaccharide (N-acetylgalactosamine-beta-3-N-acetylglucosamine-beta-4-(phosphate-6-)mannose), a carbohydrate structure present in alpha-dystroglycan (DAG1), which is required for binding laminin G-like domain-containing extracellular proteins with high affinity. This chain is Protein O-linked-mannose beta-1,4-N-acetylglucosaminyltransferase 2 (pomgnt2), found in Xenopus tropicalis (Western clawed frog).